The primary structure comprises 162 residues: Peptidyl-prolyl cis-trans isomerase-like 1 (162 aa).

One can recognise a PPIase cyclophilin-type domain in the interval 1–155 (MTTNIVLETT…EEVKIVKARV (155 aa)).

It belongs to the cyclophilin-type PPIase family. PPIL1 subfamily.

It carries out the reaction [protein]-peptidylproline (omega=180) = [protein]-peptidylproline (omega=0). Functionally, PPIases accelerate the folding of proteins. It catalyzes the cis-trans isomerization of proline imidic peptide bonds in oligopeptides. This chain is Peptidyl-prolyl cis-trans isomerase-like 1 (CYP1), found in Gibberella zeae (strain ATCC MYA-4620 / CBS 123657 / FGSC 9075 / NRRL 31084 / PH-1) (Wheat head blight fungus).